The following is a 124-amino-acid chain: Small ribosomal subunit protein uS12 (124 aa).

Aspartate 89 carries the post-translational modification 3-methylthioaspartic acid.

It belongs to the universal ribosomal protein uS12 family. Part of the 30S ribosomal subunit. Contacts proteins S8 and S17. May interact with IF1 in the 30S initiation complex.

In terms of biological role, with S4 and S5 plays an important role in translational accuracy. Functionally, interacts with and stabilizes bases of the 16S rRNA that are involved in tRNA selection in the A site and with the mRNA backbone. Located at the interface of the 30S and 50S subunits, it traverses the body of the 30S subunit contacting proteins on the other side and probably holding the rRNA structure together. The combined cluster of proteins S8, S12 and S17 appears to hold together the shoulder and platform of the 30S subunit. The protein is Small ribosomal subunit protein uS12 of Vibrio atlanticus (strain LGP32) (Vibrio splendidus (strain Mel32)).